An 84-amino-acid chain; its full sequence is Putative membrane protein insertion efficiency factor (84 aa).

The protein belongs to the UPF0161 family.

The protein resides in the cell inner membrane. Its function is as follows. Could be involved in insertion of integral membrane proteins into the membrane. This is Putative membrane protein insertion efficiency factor from Shewanella oneidensis (strain ATCC 700550 / JCM 31522 / CIP 106686 / LMG 19005 / NCIMB 14063 / MR-1).